The following is a 38-amino-acid chain: Mating hormone A-factor 2 (38 aa).

Residues M1–T12 show a composition bias toward polar residues. Residues M1–K20 form a disordered region. A propeptide spanning residues M1–N23 is cleaved from the precursor. C35 carries the cysteine methyl ester modification. C35 carries the S-farnesyl cysteine lipid modification. A propeptide spans V36–A38 (removed in mature form).

It is found in the cell membrane. In terms of biological role, the active factor is excreted into the culture medium by haploid cells of the A mating type and acts on cells of the opposite mating type (type alpha). It mediates the conjugation process between the two types by inhibiting the initiation of DNA synthesis in type alpha cells and synchronizing them with type A. This chain is Mating hormone A-factor 2 (MFA2), found in Saccharomyces cerevisiae (strain ATCC 204508 / S288c) (Baker's yeast).